Reading from the N-terminus, the 581-residue chain is Proline--tRNA ligase (581 aa).

It belongs to the class-II aminoacyl-tRNA synthetase family. ProS type 1 subfamily. In terms of assembly, homodimer.

The protein resides in the cytoplasm. The enzyme catalyses tRNA(Pro) + L-proline + ATP = L-prolyl-tRNA(Pro) + AMP + diphosphate. Functionally, catalyzes the attachment of proline to tRNA(Pro) in a two-step reaction: proline is first activated by ATP to form Pro-AMP and then transferred to the acceptor end of tRNA(Pro). As ProRS can inadvertently accommodate and process non-cognate amino acids such as alanine and cysteine, to avoid such errors it has two additional distinct editing activities against alanine. One activity is designated as 'pretransfer' editing and involves the tRNA(Pro)-independent hydrolysis of activated Ala-AMP. The other activity is designated 'posttransfer' editing and involves deacylation of mischarged Ala-tRNA(Pro). The misacylated Cys-tRNA(Pro) is not edited by ProRS. This is Proline--tRNA ligase from Leptothrix cholodnii (strain ATCC 51168 / LMG 8142 / SP-6) (Leptothrix discophora (strain SP-6)).